The chain runs to 654 residues: Chaperone protein HtpG (654 aa).

Residues M1–R344 form an a; substrate-binding region. Residues E345–R556 form a b region. Residues L557–S654 form a c region.

The protein belongs to the heat shock protein 90 family. As to quaternary structure, homodimer.

It is found in the cytoplasm. Its function is as follows. Molecular chaperone. Has ATPase activity. This chain is Chaperone protein HtpG, found in Myxococcus xanthus (strain DK1622).